Consider the following 328-residue polypeptide: L-lactate dehydrogenase (328 aa).

NAD(+)-binding positions include Val-18, Glu-39, Lys-46, Tyr-71, and 85–86; that span reads GA. The substrate site is built by Gln-88 and Arg-94. NAD(+)-binding positions include Ser-107, 124–126, and Ser-149; that span reads AAN. 126–129 provides a ligand contact to substrate; the sequence is NPVD. 154–157 is a binding site for substrate; sequence DSAR. Arg-159 and His-174 together coordinate beta-D-fructose 1,6-bisphosphate. The active-site Proton acceptor is the His-181. Residue Tyr-226 is modified to Phosphotyrosine. Substrate is bound at residue Thr-235.

Belongs to the LDH/MDH superfamily. LDH family. As to quaternary structure, homotetramer.

It is found in the cytoplasm. It catalyses the reaction (S)-lactate + NAD(+) = pyruvate + NADH + H(+). Its pathway is fermentation; pyruvate fermentation to lactate; (S)-lactate from pyruvate: step 1/1. With respect to regulation, allosterically activated by fructose 1,6-bisphosphate (FBP). In terms of biological role, catalyzes the conversion of lactate to pyruvate. In Streptococcus sanguinis (strain SK36), this protein is L-lactate dehydrogenase.